The primary structure comprises 490 residues: Coagulation factor X (490 aa).

Residues 1 to 20 form the signal peptide; it reads MANPLHLVLLGAALAGLLLS. Residues 21–40 constitute a propeptide that is removed on maturation; the sequence is GSSVFISRRAANDVLARTRR. Positions 41 to 85 constitute a Gla domain; the sequence is ANSFLEELKKGNLERECMEENCSYEEALEVFEDREKTNEFWNKYV. Residues Glu46, Glu47, Glu54, Glu56, Glu59, and Glu60 each carry the 4-carboxyglutamate modification. Cys57 and Cys62 are disulfide-bonded. An N-linked (GlcNAc...) asparagine glycan is attached at Asn61. A 4-carboxyglutamate mark is found at Glu65, Glu66, Glu69, Glu72, Glu75, and Glu79. The EGF-like 1; calcium-binding domain occupies 86 to 122; sequence DGDQCESNPCQNQGTCKDGLGMYTCSCVEGYEGQDCE. 11 cysteine pairs are disulfide-bonded: Cys90–Cys101, Cys95–Cys110, Cys112–Cys121, Cys129–Cys140, Cys136–Cys149, Cys151–Cys164, Cys172–Cys340, Cys239–Cys244, Cys259–Cys275, Cys388–Cys402, and Cys413–Cys441. Residue Asp103 is modified to (3R)-3-hydroxyaspartate. One can recognise an EGF-like 2 domain in the interval 125-165; it reads TRKLCSLDNGGCDQFCKEEENSVLCSCASGYTLGDNGKSCI. The disordered stretch occupies residues 183–230; sequence SPATNSSEGPPEAPGPEQQDDGNLTATENPFNLLDSPEPPPEDDSSSL. Residues 184–232 constitute a propeptide, activation peptide; it reads PATNSSEGPPEAPGPEQQDDGNLTATENPFNLLDSPEPPPEDDSSSLVR. N-linked (GlcNAc...) asparagine glycans are attached at residues Asn187 and Asn205. Positions 203 to 212 are enriched in polar residues; it reads DGNLTATENP. The region spanning 233–465 is the Peptidase S1 domain; that stretch reads IVGGQDCRDG…FLKWIEKSMR (233 aa). Active-site charge relay system residues include His274 and Asp320. Catalysis depends on Ser417, which acts as the Charge relay system.

It belongs to the peptidase S1 family. The two chains are formed from a single-chain precursor by the excision of two Arg residues and are held together by 1 or more disulfide bonds. Forms a heterodimer with SERPINA5. The vitamin K-dependent, enzymatic carboxylation of some glutamate residues allows the modified protein to bind calcium. Post-translationally, N- and O-glycosylated. In terms of processing, proteolytically cleaved and activated by cathepsin CTSG. The activation peptide is cleaved by factor IXa (in the intrinsic pathway), or by factor VIIa (in the extrinsic pathway). The iron and 2-oxoglutarate dependent 3-hydroxylation of aspartate and asparagine is (R) stereospecific within EGF domains.

It is found in the secreted. It carries out the reaction Selective cleavage of Arg-|-Thr and then Arg-|-Ile bonds in prothrombin to form thrombin.. Inhibited by SERPINA5. Functionally, factor Xa is a vitamin K-dependent glycoprotein that converts prothrombin to thrombin in the presence of factor Va, calcium and phospholipid during blood clotting. Factor Xa activates pro-inflammatory signaling pathways in a protease-activated receptor (PAR)-dependent manner. This is Coagulation factor X (F10) from Oryctolagus cuniculus (Rabbit).